Consider the following 30-residue polypeptide: Chassatide C9 (30 aa).

A cross-link (cyclopeptide (Gly-Asn)) is located at residues 1-30 (GIPCGESCVFIPCVTTVIGCSCKDKVCYNN). Intrachain disulfides connect Cys4/Cys20, Cys8/Cys22, and Cys13/Cys27.

Post-translationally, this is a cyclic peptide.

In terms of biological role, probably participates in a plant defense mechanism. The chain is Chassatide C9 from Chassalia chartacea (Chassalia curviflora).